The chain runs to 98 residues: Acylphosphatase (98 aa).

An Acylphosphatase-like domain is found at 12 to 98 (TYYVRVRGVV…ERRFERFQQQ (87 aa)). Catalysis depends on residues Arg27 and Asn45.

This sequence belongs to the acylphosphatase family.

The catalysed reaction is an acyl phosphate + H2O = a carboxylate + phosphate + H(+). The sequence is that of Acylphosphatase (acyP) from Burkholderia vietnamiensis (strain G4 / LMG 22486) (Burkholderia cepacia (strain R1808)).